Here is a 753-residue protein sequence, read N- to C-terminus: 5-methyltetrahydropteroyltriglutamate--homocysteine methyltransferase (753 aa).

Residues 17 to 20 (RELK) and K117 each bind 5-methyltetrahydropteroyltri-L-glutamate. Residues 431 to 433 (IGS) and E484 contribute to the L-homocysteine site. L-methionine contacts are provided by residues 431–433 (IGS) and E484. Residues 515–516 (RC) and W561 each bind 5-methyltetrahydropteroyltri-L-glutamate. D599 serves as a coordination point for L-homocysteine. D599 provides a ligand contact to L-methionine. A 5-methyltetrahydropteroyltri-L-glutamate-binding site is contributed by E605. Zn(2+)-binding residues include H641, C643, and E665. Residue H694 is the Proton donor of the active site. Zn(2+) is bound at residue C726.

The protein belongs to the vitamin-B12 independent methionine synthase family. Zn(2+) is required as a cofactor.

The enzyme catalyses 5-methyltetrahydropteroyltri-L-glutamate + L-homocysteine = tetrahydropteroyltri-L-glutamate + L-methionine. It participates in amino-acid biosynthesis; L-methionine biosynthesis via de novo pathway; L-methionine from L-homocysteine (MetE route): step 1/1. Its function is as follows. Catalyzes the transfer of a methyl group from 5-methyltetrahydrofolate to homocysteine resulting in methionine formation. In Escherichia coli O1:K1 / APEC, this protein is 5-methyltetrahydropteroyltriglutamate--homocysteine methyltransferase.